A 522-amino-acid polypeptide reads, in one-letter code: Calcium-dependent protein kinase 14 (522 aa).

Low complexity-rich tracts occupy residues 1-12 (MGNCCPPGSSSE) and 19-45 (SSGSSRPAGSAGAAASPATISPSAAPA). Residues 1 to 58 (MGNCCPPGSSSEPDPPPASSGSSRPAGSAGAAASPATISPSAAPAPAKPPAPIGPVLG) form a disordered region. The N-myristoyl glycine moiety is linked to residue Gly-2. The Protein kinase domain occupies 68–326 (YTVGKELGRG…AYDVLNHPWI (259 aa)). Residues 74 to 82 (LGRGQFGVT) and Lys-97 each bind ATP. Residue Asp-192 is the Proton acceptor of the active site. An autoinhibitory domain region spans residues 332–362 (APDTPLDNAVLGRLKQFRAMNQFKKAALRVI). EF-hand domains are found at residues 369–404 (EEIRGLKEMFKSMDSDNSGTITVDELRKGLAKKGTK), 405–440 (LTEAEVQQLMEAADADGNGTIDYEEFITATMHMNRM), 441–476 (DREEHLYTAFQYFDKDNSGYITIEELEQALREKGLM), and 480–511 (EIKDIISEVDADNDGRINYTEFVAMMRKGDPE). Residues Asp-382, Asp-384, Ser-386, Thr-388, Glu-393, Asp-418, Asp-420, Asn-422, Thr-424, Glu-429, Asp-454, Asp-456, Ser-458, Tyr-460, Glu-465, Asp-489, Asp-491, Asp-493, Arg-495, and Glu-500 each contribute to the Ca(2+) site.

Belongs to the protein kinase superfamily. Ser/Thr protein kinase family. CDPK subfamily.

It localises to the membrane. The catalysed reaction is L-seryl-[protein] + ATP = O-phospho-L-seryl-[protein] + ADP + H(+). It catalyses the reaction L-threonyl-[protein] + ATP = O-phospho-L-threonyl-[protein] + ADP + H(+). Activated by calcium. Autophosphorylation may play an important role in the regulation of the kinase activity. May play a role in signal transduction pathways that involve calcium as a second messenger. This chain is Calcium-dependent protein kinase 14, found in Oryza sativa subsp. japonica (Rice).